Here is a 66-residue protein sequence, read N- to C-terminus: Small ribosomal subunit protein bS21 (66 aa).

The protein belongs to the bacterial ribosomal protein bS21 family.

This Persephonella marina (strain DSM 14350 / EX-H1) protein is Small ribosomal subunit protein bS21.